The sequence spans 326 residues: DNA-directed RNA polymerase subunit alpha (326 aa).

The alpha N-terminal domain (alpha-NTD) stretch occupies residues 1–231; it reads MQTALLKPKI…DQLSVFAALE (231 aa). An alpha C-terminal domain (alpha-CTD) region spans residues 247 to 326; sequence IDPILLRPVD…ENWPPAGLDK (80 aa).

This sequence belongs to the RNA polymerase alpha chain family. Homodimer. The RNAP catalytic core consists of 2 alpha, 1 beta, 1 beta' and 1 omega subunit. When a sigma factor is associated with the core the holoenzyme is formed, which can initiate transcription.

It catalyses the reaction RNA(n) + a ribonucleoside 5'-triphosphate = RNA(n+1) + diphosphate. Its function is as follows. DNA-dependent RNA polymerase catalyzes the transcription of DNA into RNA using the four ribonucleoside triphosphates as substrates. This is DNA-directed RNA polymerase subunit alpha from Cupriavidus pinatubonensis (strain JMP 134 / LMG 1197) (Cupriavidus necator (strain JMP 134)).